An 82-amino-acid polypeptide reads, in one-letter code: Protein ImpC (82 aa).

This sequence belongs to the DinI family.

In terms of biological role, the imp operon is involved in UV protection and mutation, however the ImpC protein is not essential for these functions. The chain is Protein ImpC (impC) from Salmonella typhimurium.